The following is a 1544-amino-acid chain: Arf-GAP with Rho-GAP domain, ANK repeat and PH domain-containing protein 3 (1544 aa).

In terms of domain architecture, SAM spans 4–68 (PQDLDIAVWL…LRLLQTGTEE (65 aa)). Disordered stretches follow at residues 64-147 (TGTE…EQSS) and 167-194 (GRAQAAQDKAPDSSQISAPTPALRPTTG). Pro residues-rich tracts occupy residues 82–97 (SPSPAPQAQPPKPVPK) and 130–139 (EPSPRPPPLP). PH domains follow at residues 287–379 (TPLL…SCLK) and 394–483 (RPLR…EAVT). An Arf-GAP domain is found at 480–611 (EAVTETLSDY…LFRKPHPQYP (132 aa)). A C4-type zinc finger spans residues 504–527 (CADCGSSRPDWAAVNLGVVICKQC). Residues 907–1088 (TGLQEQQMSR…ELIDGYISVF (182 aa)) form the Rho-GAP domain. One can recognise a Ras-associating domain in the interval 1117 to 1210 (GDLIMEVYIE…ASLLLKKVPL (94 aa)). The PH 3 domain occupies 1223-1325 (ESPRVGLLRC…WTTSILKAQH (103 aa)). A Phosphothreonine modification is found at Thr1348. 2 positions are modified to phosphotyrosine: Tyr1403 and Tyr1408. Positions 1422 to 1544 (STSFSTTREW…SSPPSSQPLT (123 aa)) are disordered. The span at 1438–1457 (PLTSQKSLDQPFLSKSSTLG) shows a compositional bias: polar residues. A phosphoserine mark is found at Ser1444 and Ser1480. 2 stretches are compositionally biased toward low complexity: residues 1482–1492 (EEQLLQELSSL) and 1502–1527 (GLGSPSQPSSPQSPSPTGLPTQTPGF).

In terms of assembly, interacts (via SAM domain) with INPPL1/SHIP2. Post-translationally, tyrosine phosphorylated at a low basal level. PDGF treatment stimulates phosphorylation. Tyrosine phosphorylation is increased in cells that are in the process of becoming attached to a substrate and that start spreading and flattening.

The protein localises to the cytoplasm. It is found in the cytoskeleton. Its subcellular location is the cell membrane. It localises to the cell projection. The protein resides in the lamellipodium. The protein localises to the ruffle. Its function is as follows. Phosphatidylinositol 3,4,5-trisphosphate-dependent GTPase-activating protein that modulates actin cytoskeleton remodeling by regulating ARF and RHO family members. Is activated by phosphatidylinositol 3,4,5-trisphosphate (PtdIns(3,4,5)P3) binding. Can be activated by phosphatidylinositol 3,4-bisphosphate (PtdIns(3,4,5)P2) binding, albeit with lower efficiency. Acts on ARF6, RAC1, RHOA and CDC42. Plays a role in the internalization of anthrax toxin. This chain is Arf-GAP with Rho-GAP domain, ANK repeat and PH domain-containing protein 3 (ARAP3), found in Homo sapiens (Human).